Reading from the N-terminus, the 262-residue chain is Light-harvesting complex-like protein 3 isotype 1, chloroplastic (262 aa).

Residues 1 to 39 (MALFSPPISSSSLQNPNFIPKFSFSLLSSNRFSLLSVTR) constitute a chloroplast transit peptide. Transmembrane regions (helical) follow at residues 180–200 (AAMI…VGLV) and 202–222 (QMGN…VLFI).

As to quaternary structure, interacts with GGR. Forms homodimer, and heterodimer with LIL3.2. In terms of tissue distribution, expressed in photosynthetically active tissues (at protein level).

The protein localises to the plastid. The protein resides in the chloroplast thylakoid membrane. In terms of biological role, light-harvesting-like protein required for biosynthesis of phytylated chlorophylls and alpha-tocopherol in green seedlings. Functions by anchoring geranylgeranyl reductase (GGR) in the thylakoid membrane, leading to the stabilization of GGR activity. Binds chlorophyll a in the thylakoid membrane. Plays a role in the regulation of chlorophyll biosynthesis under light stress and under standard growth conditions. The polypeptide is Light-harvesting complex-like protein 3 isotype 1, chloroplastic (LIL3.1) (Arabidopsis thaliana (Mouse-ear cress)).